Here is a 337-residue protein sequence, read N- to C-terminus: Cytoskeleton protein RodZ (337 aa).

Topologically, residues 1–111 are cytoplasmic; sequence MNTEATHDQN…LGKRRKKRDG (111 aa). One can recognise an HTH cro/C1-type domain in the interval 19-71; it reads LRNAREQLGLSQQAVAERLCLKVSTVRDIEEDKAPADLASTFLRGYIRSYARL. Residues 30-49 constitute a DNA-binding region (H-T-H motif); sequence QQAVAERLCLKVSTVRDIEE. Residues 112-132 form a helical; Signal-anchor for type II membrane protein membrane-spanning segment; sequence WLMTFTWLVLFVVIGLSGAWW. Topologically, residues 133-337 are periplasmic; the sequence is WQDHKAQQEE…TLNAEQSPAQ (205 aa). The segment covering 145 to 167 has biased composition (polar residues); the sequence is TMADQSSAELSSNSEQGQSVPLN. The segment at 145–218 is disordered; the sequence is TMADQSSAEL…AVVSPSQANV (74 aa). Residues 168–207 are compositionally biased toward low complexity; it reads TSTTTDPATTSTPPASVDTTATNTQTPAVTAPAPAVDPQQ. A compositionally biased stretch (polar residues) spans 208 to 218; it reads NAVVSPSQANV.

It belongs to the RodZ family.

Its subcellular location is the cell inner membrane. In terms of biological role, cytoskeletal protein that is involved in cell-shape control through regulation of the length of the long axis. The polypeptide is Cytoskeleton protein RodZ (Shigella flexneri serotype 5b (strain 8401)).